The chain runs to 153 residues: Putative tRNA (cytidine(34)-2'-O)-methyltransferase (153 aa).

Residues glycine 102, isoleucine 122, and serine 131 each coordinate S-adenosyl-L-methionine.

Belongs to the class IV-like SAM-binding methyltransferase superfamily. RNA methyltransferase TrmH family. TrmL subfamily.

The protein localises to the cytoplasm. It catalyses the reaction cytidine(34) in tRNA + S-adenosyl-L-methionine = 2'-O-methylcytidine(34) in tRNA + S-adenosyl-L-homocysteine + H(+). The enzyme catalyses 5-carboxymethylaminomethyluridine(34) in tRNA(Leu) + S-adenosyl-L-methionine = 5-carboxymethylaminomethyl-2'-O-methyluridine(34) in tRNA(Leu) + S-adenosyl-L-homocysteine + H(+). Functionally, could methylate the ribose at the nucleotide 34 wobble position in tRNA. This chain is Putative tRNA (cytidine(34)-2'-O)-methyltransferase, found in Synechocystis sp. (strain ATCC 27184 / PCC 6803 / Kazusa).